A 346-amino-acid polypeptide reads, in one-letter code: MAEAYKQAGVDIEAGYKAVSLMKQHVQKTMRPEVLSGLGGFGGMFDLSSLGYREPVLISGTDGVGTKLKIAFMMDCHDTIGIDCVAMCVNDIVVQGAEPLFFLDYIACGKAIPEKIAQIVKGIADGCVEAGCALIGGETAEMPGMYDENEYDVAGFAVGIAEKSKLVTGSAIQAGDALIGLASNGIHSNGYSLVRRIVFEQAKLALDRVYEPLSVPLGEELLKPTRIYVKPLLNVMKQFEIKGMAHITGGGFIENIPRMLPKGLGAEIDYGSWPIPPVFDLLQEKGNLLRHDMFSIFNMGIGMVLAVDSEMIHPVIARLEELGEKAYLIGRVKQGEGVSFAGGAMS.

The protein belongs to the AIR synthase family.

The protein localises to the cytoplasm. The catalysed reaction is 2-formamido-N(1)-(5-O-phospho-beta-D-ribosyl)acetamidine + ATP = 5-amino-1-(5-phospho-beta-D-ribosyl)imidazole + ADP + phosphate + H(+). It participates in purine metabolism; IMP biosynthesis via de novo pathway; 5-amino-1-(5-phospho-D-ribosyl)imidazole from N(2)-formyl-N(1)-(5-phospho-D-ribosyl)glycinamide: step 2/2. This Geobacillus sp. (strain WCH70) protein is Phosphoribosylformylglycinamidine cyclo-ligase.